Here is a 247-residue protein sequence, read N- to C-terminus: Carboxy-S-adenosyl-L-methionine synthase (247 aa).

S-adenosyl-L-methionine-binding positions include Tyr-39, Gly-64–Ser-66, Asp-89–Asn-90, Asp-117–Ile-118, Asn-132, and Arg-199.

It belongs to the class I-like SAM-binding methyltransferase superfamily. Cx-SAM synthase family. Homodimer.

The enzyme catalyses prephenate + S-adenosyl-L-methionine = carboxy-S-adenosyl-L-methionine + 3-phenylpyruvate + H2O. Its function is as follows. Catalyzes the conversion of S-adenosyl-L-methionine (SAM) to carboxy-S-adenosyl-L-methionine (Cx-SAM). The sequence is that of Carboxy-S-adenosyl-L-methionine synthase from Escherichia coli O17:K52:H18 (strain UMN026 / ExPEC).